Consider the following 148-residue polypeptide: Large ribosomal subunit protein bL9 (148 aa).

This sequence belongs to the bacterial ribosomal protein bL9 family.

Functionally, binds to the 23S rRNA. This is Large ribosomal subunit protein bL9 from Leptospira biflexa serovar Patoc (strain Patoc 1 / Ames).